The chain runs to 2776 residues: A-kinase anchor protein 13 (2776 aa).

Disordered stretches follow at residues 371–401 (KNKD…SCLQ), 452–518 (EPDA…TETT), 547–584 (PAEA…QSSP), 618–641 (TMPG…PAQS), 653–689 (EAGT…ESTM), 760–871 (VSQT…SPTA), 910–951 (ALGQ…IPGL), 995–1029 (GAAK…LPSG), 1431–1508 (LCDT…MDSI), 1527–1546 (PFRR…AEMN), and 1565–1603 (RRSF…FGGE). A compositionally biased stretch (polar residues) spans 389-401 (DSGSASHQDSCLQ). The interval 493-515 (QNNKPQVGEGTKERLENSDSSTT) is important for interaction with PRKAR2A. Residues 560–573 (PTEKPGMETQERGC) show a composition bias toward basic and acidic residues. The segment covering 659–672 (AEATHQPSTVTSSG) has biased composition (polar residues). Positions 773–788 (SPPASSFSLASSPESE) are enriched in low complexity. A Phosphoserine modification is found at Ser784. Thr809 is subject to Phosphothreonine. Composition is skewed to basic and acidic residues over residues 820–834 (DGPD…DKVG) and 914–940 (DGKD…EDQR). Residue Thr941 is modified to Phosphothreonine. The span at 1005–1020 (TSLSADSKQKASSTEQ) shows a compositional bias: polar residues. Over residues 1433–1444 (DTTGSSSSTDDT) the composition is skewed to low complexity. The span at 1454-1476 (GSDVSLPQTSKLNRSRNHQSANG) shows a compositional bias: polar residues. Ser1455, Ser1473, Ser1507, Ser1532, and Ser1569 each carry phosphoserine. The important for interaction with MAP2K3 stretch occupies residues 1552–1678 (RALGHVVRRP…SRPFHSTSAN (127 aa)). The span at 1583–1594 (SSSLEMSSANSS) shows a compositional bias: low complexity. A phosphoserine mark is found at Ser1608, Ser1611, and Ser1613. The residue at position 1637 (Lys1637) is an N6-methyllysine. The disordered stretch occupies residues 1711–1756 (TFSYIRNKMSSSKKSKEKEKEKDKIKEKEKDSKEKEKDKKTLNGHT). Residues 1724–1751 (KSKEKEKEKDKIKEKEKDSKEKEKDKKT) show a composition bias toward basic and acidic residues. Residues 1754–1801 (GHTFSPIPIVGPISCSQCMKPFTNKDAYTCAGCGAFVHKGCRENLASC) form a Phorbol-ester/DAG-type zinc finger. Residues Ser1839, Ser1858, and Ser1892 each carry the phosphoserine modification. The interval 1882-2776 (MSNTWKFLSH…VPAEGEEIFC (895 aa)) is interaction with ESR1. Residue Thr1893 is modified to Phosphothreonine. Phosphoserine is present on residues Ser1895 and Ser1908. A DH domain is found at 1957–2154 (KRQEVIYELM…KDVIGAVDSK (198 aa)). In terms of domain architecture, PH spans 2194–2296 (KLVRDGSVFL…WIQIIQDTIN (103 aa)). A phosphoserine mark is found at Ser2308 and Ser2361. A coiled-coil region spans residues 2308–2345 (SENEEEKKLLDTKARELKEQLQQKDQQILLLLEEKEMI). Thr2431 carries the phosphothreonine modification. The segment at 2436–2471 (DCHQMNASKGGEKEEGDDGQDLRRTESDSGLKKGGN) is disordered. Residues 2455-2466 (QDLRRTESDSGL) show a composition bias toward basic and acidic residues. Ser2527 and Ser2530 each carry phosphoserine. The stretch at 2532-2646 (LIEQEKQRSL…ERLSQRQMDQ (115 aa)) forms a coiled coil. 2 disordered regions span residues 2549 to 2605 (ANLQ…EELQ) and 2626 to 2776 (EREQ…EIFC). 2 stretches are compositionally biased toward basic and acidic residues: residues 2558 to 2605 (HLEE…EELQ) and 2626 to 2640 (EREQ…ERLS). Composition is skewed to polar residues over residues 2641-2653 (QRQM…QVSN), 2665-2700 (LPNS…SISR), and 2713-2727 (SASQ…SQAP). 2 positions are modified to phosphoserine: Ser2673 and Ser2692.

As to quaternary structure, interacts with the cAMP-dependent protein kinase (PKA) holoenzyme and with the regulatory subunit PRKAR2A. Interacts with RHOA. Also interacts with RHOB and RHOC. Identified in a ternary complex with RHOA and PRKAR2A. Identified in a complex with NR3C1 and RHOA. Interacts with BRAF and KSR1. Identified in a complex with BRAF and KSR1. Component of a signaling complex containing at least AKAP13, PKN1, MAPK14, ZAK and MAP2K3. Within this complex, AKAP13 interacts directly with PKN1, which in turn recruits MAPK14, MAP2K3 and ZAK. Interacts (phosphorylated form) with YWHAB and YWHAZ. Interaction with YWHAB inhibits activation of RHOA, interferes with PKN1 binding and activation of MAP kinases. Interacts with GNA12. Interacts with IKBKB. Interacts with ESR1, THRA, PPARA and NME2. Interacts (via the C-terminal domain after the PH domain) with MEF2C and RXRB. Interacts (via the C-terminal domain after the PH domain) with PRKD1. In terms of tissue distribution, detected in embryonic heart, limb bud, first branchial arch and forebrain (at protein level). Detected in heart. Detected in perichondrium, but not in the bone growth plate.

It localises to the cytoplasm. The protein localises to the cytosol. Its subcellular location is the cell cortex. The protein resides in the cytoskeleton. It is found in the nucleus. It localises to the membrane. Scaffold protein that plays an important role in assembling signaling complexes downstream of several types of G protein-coupled receptors. Activates RHOA in response to signaling via G protein-coupled receptors via its function as Rho guanine nucleotide exchange factor. May also activate other Rho family members. Part of a kinase signaling complex that links ADRA1A and ADRA1B adrenergic receptor signaling to the activation of downstream p38 MAP kinases, such as MAPK11 and MAPK14. Part of a signaling complex that links ADRA1B signaling to the activation of RHOA and IKBKB/IKKB, leading to increased NF-kappa-B transcriptional activity. Part of a RHOA-dependent signaling cascade that mediates responses to lysophosphatidic acid (LPA), a signaling molecule that activates G-protein coupled receptors and potentiates transcriptional activation of the glucocorticoid receptor NR3C1. Part of a signaling cascade that stimulates MEF2C-dependent gene expression in response to lysophosphatidic acid (LPA). Part of a signaling pathway that activates MAPK11 and/or MAPK14 and leads to increased transcription activation of the estrogen receptors ESR1 and ESR2. Part of a signaling cascade that links cAMP and EGFR signaling to BRAF signaling and to PKA-mediated phosphorylation of KSR1, leading to the activation of downstream MAP kinases, such as MAPK1 or MAPK3. Functions as a scaffold protein that anchors cAMP-dependent protein kinase (PKA) and PRKD1. This promotes activation of PRKD1, leading to increased phosphorylation of HDAC5 and ultimately cardiomyocyte hypertrophy. Has no guanine nucleotide exchange activity on CDC42, Ras or Rac. Required for normal embryonic heart development, and in particular for normal sarcomere formation in the developing cardiomyocytes. Plays a role in cardiomyocyte growth and cardiac hypertrophy in response to activation of the beta-adrenergic receptor by phenylephrine or isoproterenol. Required for normal adaptive cardiac hypertrophy in response to pressure overload. Plays a role in osteogenesis. In Mus musculus (Mouse), this protein is A-kinase anchor protein 13.